The primary structure comprises 169 residues: Cell division inhibitor SulA (169 aa).

Positions 1-16 (MFTSAHANRSPLTSAS) are enriched in polar residues. Residues 1–20 (MFTSAHANRSPLTSASVRRP) are disordered. A ftsZ binding region spans residues 106–112 (ALRTGNY). Residues 162 to 169 (KIHSNLYH) are lon protease binding.

This sequence belongs to the SulA family. As to quaternary structure, interacts with FtsZ. Post-translationally, is rapidly cleaved and degraded by the Lon protease once DNA damage is repaired.

Functionally, component of the SOS system and an inhibitor of cell division. Accumulation of SulA causes rapid cessation of cell division and the appearance of long, non-septate filaments. In the presence of GTP, binds a polymerization-competent form of FtsZ in a 1:1 ratio, thus inhibiting FtsZ polymerization and therefore preventing it from participating in the assembly of the Z ring. This mechanism prevents the premature segregation of damaged DNA to daughter cells during cell division. The sequence is that of Cell division inhibitor SulA from Klebsiella aerogenes (Enterobacter aerogenes).